Here is a 731-residue protein sequence, read N- to C-terminus: Fatty acid oxidation complex subunit alpha (731 aa).

Residues 15–204 (TEKTSAFSLT…RQGLVDEAVP (190 aa)) are enoyl-CoA hydratase. Residues 320-729 (KPIHRVGILG…FYPPADKDNS (410 aa)) form a 3-hydroxyacyl-CoA dehydrogenase region.

In the N-terminal section; belongs to the enoyl-CoA hydratase/isomerase family. The protein in the central section; belongs to the 3-hydroxyacyl-CoA dehydrogenase family. Heterotetramer of two alpha chains (FadJ) and two beta chains (FadI).

The protein localises to the cytoplasm. The catalysed reaction is a (3S)-3-hydroxyacyl-CoA = a (2E)-enoyl-CoA + H2O. The enzyme catalyses a 4-saturated-(3S)-3-hydroxyacyl-CoA = a (3E)-enoyl-CoA + H2O. It catalyses the reaction a (3S)-3-hydroxyacyl-CoA + NAD(+) = a 3-oxoacyl-CoA + NADH + H(+). It carries out the reaction (3S)-3-hydroxybutanoyl-CoA = (3R)-3-hydroxybutanoyl-CoA. Its pathway is lipid metabolism; fatty acid beta-oxidation. Catalyzes the formation of a hydroxyacyl-CoA by addition of water on enoyl-CoA. Also exhibits 3-hydroxyacyl-CoA epimerase and 3-hydroxyacyl-CoA dehydrogenase activities. This Pectobacterium atrosepticum (strain SCRI 1043 / ATCC BAA-672) (Erwinia carotovora subsp. atroseptica) protein is Fatty acid oxidation complex subunit alpha.